Consider the following 194-residue polypeptide: Lysozyme g-like protein 1 (194 aa).

Positions 1-19 are cleaved as a signal peptide; it reads MSALWLLLGLLALMDLSES. 2 disulfide bridges follow: Cys-24–Cys-80 and Cys-38–Cys-49.

Belongs to the glycosyl hydrolase 23 family.

It localises to the secreted. The chain is Lysozyme g-like protein 1 (LYG1) from Homo sapiens (Human).